We begin with the raw amino-acid sequence, 320 residues long: Cytochrome c biogenesis protein CcsA (320 aa).

8 helical membrane-spanning segments follow: residues 9–29, 44–64, 71–91, 99–119, 144–164, 226–246, 261–281, and 287–307; these read ILIH…FLTL, GMIV…IYSG, LYES…VCYF, LNAI…SGLL, MVLG…LLVI, IISL…VWAN, WAFI…NINL, and AIVA…VNLL.

It belongs to the CcmF/CycK/Ccl1/NrfE/CcsA family. In terms of assembly, may interact with Ccs1.

It localises to the plastid. The protein localises to the chloroplast thylakoid membrane. Its function is as follows. Required during biogenesis of c-type cytochromes (cytochrome c6 and cytochrome f) at the step of heme attachment. The sequence is that of Cytochrome c biogenesis protein CcsA from Carica papaya (Papaya).